We begin with the raw amino-acid sequence, 256 residues long: uncharacterized protein (256 aa).

7 helical membrane-spanning segments follow: residues 32–52 (ILAS…GSYF), 59–79 (FAFP…AYGG), 112–132 (YAGN…TGLF), 156–176 (LFFR…IPMS), 184–204 (LFTM…HSIA), 207–227 (CTFA…MGAV), and 230–250 (LIPV…WMYY).

It belongs to the FNT transporter (TC 1.A.16) family.

Its subcellular location is the cell membrane. This is an uncharacterized protein from Bacillus subtilis (strain 168).